Here is a 346-residue protein sequence, read N- to C-terminus: Protein SHI RELATED SEQUENCE 5 (346 aa).

The interval 7-31 (LGGRDNNSNNNKQDHHQVDKDHHHQ) is disordered. A compositionally biased stretch (basic and acidic residues) spans 18–31 (KQDHHQVDKDHHHQ). Cysteine 125, cysteine 128, cysteine 136, cysteine 141, cysteine 145, and cysteine 152 together coordinate Zn(2+). A DNA-binding region (zn(2)-C6 fungal-type; degenerate) is located at residues 125 to 152 (CQDCGNQAKKDCPHMRCRTCCKSRGFHC). Residues 175 to 186 (SLQHHSASSRET) show a composition bias toward polar residues. A disordered region spans residues 175–215 (SLQHHSASSRETQNAKRLREASGGDNNDDKDHSGGGGSALA). Basic and acidic residues predominate over residues 187-207 (QNAKRLREASGGDNNDDKDHS). A Required for homo- and heterodimerization motif is present at residues 269–272 (IGGH).

This sequence belongs to the SHI protein family.

The protein resides in the nucleus. Transcription activator that binds DNA on 5'-ACTCTAC-3' and promotes auxin homeostasis-regulating gene expression (e.g. YUC genes), as well as genes affecting stamen development, cell expansion and timing of flowering. Synergistically with other SHI-related proteins, regulates gynoecium, stamen and leaf development in a dose-dependent manner, controlling apical-basal patterning. Promotes style and stigma formation, and influences vascular development during gynoecium development. May also have a role in the formation and/or maintenance of the shoot apical meristem (SAM). The protein is Protein SHI RELATED SEQUENCE 5 (SRS5) of Arabidopsis thaliana (Mouse-ear cress).